The sequence spans 83 residues: Cytochrome b559 subunit alpha (83 aa).

A helical transmembrane segment spans residues 21-35; sequence VIHSITIPSLFIAGW. H23 lines the heme pocket.

It belongs to the PsbE/PsbF family. In terms of assembly, heterodimer of an alpha subunit and a beta subunit. PSII is composed of 1 copy each of membrane proteins PsbA, PsbB, PsbC, PsbD, PsbE, PsbF, PsbH, PsbI, PsbJ, PsbK, PsbL, PsbM, PsbT, PsbX, PsbY, PsbZ, Psb30/Ycf12, at least 3 peripheral proteins of the oxygen-evolving complex and a large number of cofactors. It forms dimeric complexes. The cofactor is heme b.

It is found in the plastid. The protein localises to the chloroplast thylakoid membrane. In terms of biological role, this b-type cytochrome is tightly associated with the reaction center of photosystem II (PSII). PSII is a light-driven water:plastoquinone oxidoreductase that uses light energy to abstract electrons from H(2)O, generating O(2) and a proton gradient subsequently used for ATP formation. It consists of a core antenna complex that captures photons, and an electron transfer chain that converts photonic excitation into a charge separation. The polypeptide is Cytochrome b559 subunit alpha (Ginkgo biloba (Ginkgo)).